The primary structure comprises 201 residues: Large ribosomal subunit protein mL61 (201 aa).

Residues 87–118 (RDDKDAKPSSTPFPTSSADGSSPAPKPAQGER) form a disordered region. Polar residues predominate over residues 94 to 106 (PSSTPFPTSSADG).

The protein belongs to the mitochondrion-specific ribosomal protein mL61 family. Component of the mitochondrial large ribosomal subunit (mt-LSU). Mature N.crassa 74S mitochondrial ribosomes consist of a small (37S) and a large (54S) subunit. The 37S small subunit contains a 16S ribosomal RNA (16S mt-rRNA) and 32 different proteins. The 54S large subunit contains a 23S rRNA (23S mt-rRNA) and 42 different proteins.

It localises to the mitochondrion. Functionally, component of the mitochondrial ribosome (mitoribosome), a dedicated translation machinery responsible for the synthesis of mitochondrial genome-encoded proteins, including at least some of the essential transmembrane subunits of the mitochondrial respiratory chain. The mitoribosomes are attached to the mitochondrial inner membrane and translation products are cotranslationally integrated into the membrane. This is Large ribosomal subunit protein mL61 (mrp49) from Neurospora crassa (strain ATCC 24698 / 74-OR23-1A / CBS 708.71 / DSM 1257 / FGSC 987).